Here is a 164-residue protein sequence, read N- to C-terminus: Thiol peroxidase (164 aa).

A Thioredoxin domain is found at 17 to 162 (IKVGDTFPDF…YDEVLQAAQA (146 aa)). Cysteine 58 (cysteine sulfenic acid (-SOH) intermediate) is an active-site residue. A disulfide bond links cysteine 58 and cysteine 92.

Belongs to the peroxiredoxin family. Tpx subfamily. Homodimer.

It catalyses the reaction a hydroperoxide + [thioredoxin]-dithiol = an alcohol + [thioredoxin]-disulfide + H2O. In terms of biological role, thiol-specific peroxidase that catalyzes the reduction of hydrogen peroxide and organic hydroperoxides to water and alcohols, respectively. Plays a role in cell protection against oxidative stress by detoxifying peroxides. This is Thiol peroxidase from Clostridium acetobutylicum (strain ATCC 824 / DSM 792 / JCM 1419 / IAM 19013 / LMG 5710 / NBRC 13948 / NRRL B-527 / VKM B-1787 / 2291 / W).